A 720-amino-acid polypeptide reads, in one-letter code: Phenylalanine--tRNA ligase beta subunit, chloroplastic (720 aa).

The B5 domain occupies Asn319–Ser404. Mg(2+) contacts are provided by Asp382, Asp388, Glu391, and Glu392. Positions Ser626 to Arg719 constitute an FDX-ACB domain.

Belongs to the phenylalanyl-tRNA synthetase beta subunit family. Type 1 subfamily. In terms of assembly, tetramer of two alpha and two beta subunits. Mg(2+) is required as a cofactor.

It is found in the plastid. The protein localises to the chloroplast. It catalyses the reaction tRNA(Phe) + L-phenylalanine + ATP = L-phenylalanyl-tRNA(Phe) + AMP + diphosphate + H(+). The polypeptide is Phenylalanine--tRNA ligase beta subunit, chloroplastic (pheT) (Porphyra purpurea (Red seaweed)).